Here is a 743-residue protein sequence, read N- to C-terminus: Dolichyl-phosphooligosaccharide-protein glycotransferase 2 (743 aa).

The Cytoplasmic segment spans residues 1 to 7 (MKIDKRL). A helical membrane pass occupies residues 8–28 (MVIVAIATLFRMIPFRLKYLV). Positions 29-31 (GSD) match the DXD motif 1 motif. Over 29 to 91 (GSDPYFHLAY…FSFLGISLYT (63 aa)) the chain is Extracellular. Residue Asp-31 participates in Mn(2+) binding. A helical membrane pass occupies residues 92 to 112 (AFRVTPVIFGVLTVVFFYLSL). Topologically, residues 113 to 119 (KKLYNRD) are cytoplasmic. Residues 120–140 (VAFIVGLFLGVNYGHIFRSMA) form a helical membrane-spanning segment. Residues 141-144 (NYYR) are Extracellular-facing. Positions 144 and 146 each coordinate Mn(2+). The short motif at 144–146 (RGD) is the DXD motif 2 element. Residues 145–165 (GDNYMLFWYSVALLGIALGLK) form a helical membrane-spanning segment. At 166–170 (TRSKY) the chain is on the cytoplasmic side. Transmembrane regions (helical) follow at residues 171–191 (RYLF…FWQA) and 192–212 (YYPI…YAYL). Over 213 to 216 (KSPK) the chain is Cytoplasmic. Residues 217–237 (LFLDSILIVLSTGLGVLIANI) form a helical membrane-spanning segment. At 238–272 (LGDKVGYGMLGYTDWMGKKVAETFGLEFGFIKDAY) the chain is on the extracellular side. A helical transmembrane segment spans residues 273-293 (LLIHVKYLLPLSLVFLGFLII). Residues 294 to 302 (TKKLNPKIK) are Cytoplasmic-facing. A helical transmembrane segment spans residues 303–323 (VGVLVGGSILAFIVMLVKFPA). Topologically, residues 324 to 345 (LKDLSTGFGTFREVPISETLPP) are extracellular. Residues 333-336 (TFRE) carry the TIXE motif motif. Residues 346–366 (TLDDLWRAYNIAIFLAALYIL) form a helical membrane-spanning segment. Residues 367-373 (RLRKIRS) are Cytoplasmic-facing. Residues 374 to 391 (GDAILLGYVITSLWMLRY) form a helical membrane-spanning segment. Over 392–394 (WTR) the chain is Extracellular. Arg-394 provides a ligand contact to a glycophospholipid. A helical membrane pass occupies residues 395-415 (FLFTAAPAVAFLSGIGVYELT). The Cytoplasmic portion of the chain corresponds to 416–424 (RRIKENKIR). A helical transmembrane segment spans residues 425-445 (ITSLGVVILLSSAFSLGEVYS). The Extracellular portion of the chain corresponds to 446 to 743 (VKPFMNENWE…LDRGIVRVKN (298 aa)). Positions 474–476 (WWD) are interacts with target acceptor peptide in protein substrate. The WWDYG motif motif lies at 474-478 (WWDWG). The short motif at 526–533 (DILKFEAI) is the DK motif element.

Belongs to the STT3 family. Mn(2+) is required as a cofactor. Mg(2+) serves as cofactor.

The protein localises to the cell membrane. It catalyses the reaction an archaeal dolichyl phosphooligosaccharide + [protein]-L-asparagine = an archaeal dolichyl phosphate + a glycoprotein with the oligosaccharide chain attached by N-beta-D-glycosyl linkage to a protein L-asparagine.. The protein operates within protein modification; protein glycosylation. Functionally, oligosaccharyl transferase (OST) that catalyzes the initial transfer of a defined glycan (ManNAcXyl(2)GlcAMan(2)GalNAc in P.furiosus) from the lipid carrier dolichol-monophosphate to an asparagine residue within an Asn-X-Ser/Thr consensus motif in nascent polypeptide chains, the first step in protein N-glycosylation. This chain is Dolichyl-phosphooligosaccharide-protein glycotransferase 2 (aglB2), found in Pyrococcus furiosus (strain ATCC 43587 / DSM 3638 / JCM 8422 / Vc1).